The chain runs to 202 residues: Small ribosomal subunit protein uS4c (202 aa).

An S4 RNA-binding domain is found at 90–153 (MRLDNVTFRL…KSETIISKNI (64 aa)).

It belongs to the universal ribosomal protein uS4 family. Part of the 30S ribosomal subunit. Contacts protein S5. The interaction surface between S4 and S5 is involved in control of translational fidelity.

It localises to the plastid. Its subcellular location is the chloroplast. Functionally, one of the primary rRNA binding proteins, it binds directly to 16S rRNA where it nucleates assembly of the body of the 30S subunit. Its function is as follows. With S5 and S12 plays an important role in translational accuracy. The chain is Small ribosomal subunit protein uS4c (rps4) from Hypnum cupressiforme (Cypress-leaved plait-moss).